Consider the following 226-residue polypeptide: Putative O-methyltransferase Mvan_4497 (226 aa).

S-adenosyl-L-methionine contacts are provided by residues Val53, Glu75, 77–78, Ser83, Asp101, and Val102; that span reads GT. Asp149 is a binding site for substrate.

It belongs to the class I-like SAM-binding methyltransferase superfamily. Cation-dependent O-methyltransferase family.

This chain is Putative O-methyltransferase Mvan_4497, found in Mycolicibacterium vanbaalenii (strain DSM 7251 / JCM 13017 / BCRC 16820 / KCTC 9966 / NRRL B-24157 / PYR-1) (Mycobacterium vanbaalenii).